A 1336-amino-acid polypeptide reads, in one-letter code: Glutamate receptor ionotropic, NMDA 2D (1336 aa).

The first 27 residues, 1 to 27, serve as a signal peptide directing secretion; sequence MRGAGGPRGPRGPAKMLLLLALACASP. Over 28 to 582 the chain is Extracellular; sequence FPEEAPGPGG…SPSAFLEPYS (555 aa). Residue Asn92 is glycosylated (N-linked (GlcNAc...) asparagine). A disulfide bridge connects residues Cys104 and Cys348. N-linked (GlcNAc...) asparagine glycosylation is found at Asn352, Asn366, Asn384, and Asn467. Disulfide bonds link Cys455–Cys483 and Cys462–Cys484. Positions 539, 541, and 546 each coordinate L-glutamate. An N-linked (GlcNAc...) asparagine glycan is attached at Asn569. A helical transmembrane segment spans residues 583–604; it reads PAVWVMMFVMCLTVVAVTVFIF. At 605 to 629 the chain is on the cytoplasmic side; sequence EYLSPVGYNRSLATGKRPGGSTFTI. An intramembrane region (discontinuously helical) is located at residues 630 to 641; the sequence is GKSIWLLWALVF. Residues 631–650 are pore-forming; it reads KSIWLLWALVFNNSVPVENP. The Cytoplasmic portion of the chain corresponds to 642-653; the sequence is NNSVPVENPRGT. Residues 654-674 traverse the membrane as a helical segment; that stretch reads TSKIMVLVWAFFAVIFLASYT. Residues 675–843 lie on the Extracellular side of the membrane; that stretch reads ANLAAFMIQE…EVMSSKLDID (169 aa). The L-glutamate site is built by Ser717, Thr718, and Asp759. Cys773 and Cys828 are disulfide-bonded. The chain crosses the membrane as a helical span at residues 844–867; it reads NMAGVFYMLLVAMGLSLLVFAWEH. The Cytoplasmic segment spans residues 868–1336; that stretch reads LVYWRLRHCL…AHFSSLESEV (469 aa). 3 disordered regions span residues 900-934, 981-1123, and 1225-1336; these read EAAPPPAKPPPPPQPLPSPAYPAPRPAPGPAPFVP, RAAP…SLGG, and RCGC…ESEV. A compositionally biased stretch (pro residues) spans 902 to 932; it reads APPPAKPPPPPQPLPSPAYPAPRPAPGPAPF. Residues 981–991 show a composition bias toward low complexity; it reads RAAPRGAAGRP. Positions 992 to 1006 are enriched in pro residues; it reads LSPPAAQPPQKPPPS. Over residues 1035–1044 the composition is skewed to low complexity; that stretch reads AAAATAVGPP. Residues 1074-1089 show a composition bias toward gly residues; the sequence is PGAGGAGGTGGAGGGA. Pro residues predominate over residues 1091–1104; sequence AAPPPCRAAPPPCP. Residues 1225–1240 are compositionally biased toward basic residues; the sequence is RCGCPRSHPHRPRASH. Arg1316 is modified (omega-N-methylarginine). Residue Ser1326 is modified to Phosphoserine. The PDZ-binding motif lies at 1334–1336; sequence SEV.

Belongs to the glutamate-gated ion channel (TC 1.A.10.1) family. NR2D/GRIN2D subfamily. Heterotetramer. Forms heterotetrameric channels composed of two GluN1/zeta subunits (GRIN1), and two identical GluN2/epsilon subunits (GRIN2A, GRIN2B, GRIN2C or GRIN2D) or GluN3 subunits (GRIN3A or GRIN3B) (in vitro). In vivo, the subunit composition may depend on the expression levels of the different subunits. Interacts with PDZ domains of PATJ and DLG4.

The protein localises to the cell membrane. The protein resides in the postsynaptic cell membrane. The enzyme catalyses Ca(2+)(in) = Ca(2+)(out). It catalyses the reaction Na(+)(in) = Na(+)(out). It carries out the reaction K(+)(in) = K(+)(out). Component of N-methyl-D-aspartate (NMDA) receptors (NMDARs) that function as heterotetrameric, ligand-gated cation channels with high calcium permeability and voltage-dependent block by Mg(2+). Participates in synaptic plasticity for learning and memory formation. Channel activation requires binding of the neurotransmitter L-glutamate to the GluN2 subunit, glycine or D-serine binding to the GluN1 subunit, plus membrane depolarization to eliminate channel inhibition by Mg(2+). NMDARs mediate simultaneously the potasium efflux and the influx of calcium and sodium. Each GluN2 subunit confers differential attributes to channel properties, including activation, deactivation and desensitization kinetics, pH sensitivity, Ca2(+) permeability, and binding to allosteric modulators. The protein is Glutamate receptor ionotropic, NMDA 2D of Homo sapiens (Human).